The chain runs to 506 residues: MEKFKRSLELERSQQHNFIYPLIFQEYIYALAHDRGLNRSIFLENMGYDNKSSLLIVKRLITYLITQMYQQNHFIFSGNDSNQNKFLGYNTKLYSQMIFEGFAVVVEIPFYLRLLSFLEGKERVKSHNLRSIHSIFPFFEDKFSHLNYVLDILIPHPIHLEILVQTLRYWVKDASSLHLLRFFLHEYPIWNSLITQKKSSFSFSKRNQRFFLFLYNFHVCEYESIFVFLRNQSYHLRSISSETFLERISFYKKIELELFTKDFKAILWVFKEPFLHYVRYRGKALLVSKGTSLLMNKWKYYLVNLWQCYFYMWSQPRRIHINQLANHSLDFLGYLSSVRLKPLMVRSQMIENSFLIENAIKKFDTLMPITPMIESLVKAKFCNVLGHPMSKPVWAALSDSDIIERFGHIYRNLSHYHSGSLKKMSLYRIKYILRLSCARTLARKHKSTIRAFLKRLGVGLLEEFFTEEEQVFYLTFPKASSTSGELYRRRIWYLDIICINDLANYE.

It belongs to the intron maturase 2 family. MatK subfamily.

The protein localises to the plastid. The protein resides in the chloroplast. Its function is as follows. Usually encoded in the trnK tRNA gene intron. Probably assists in splicing its own and other chloroplast group II introns. The chain is Maturase K from Empetrum nigrum (Black crowberry).